A 554-amino-acid polypeptide reads, in one-letter code: Glutamine--tRNA ligase (554 aa).

Positions 34 to 44 (PEPNGYLHIGH) match the 'HIGH' region motif. ATP is bound by residues 35-37 (EPN) and 41-47 (HIGHAKS). The L-glutamine site is built by Asp67 and Tyr212. ATP contacts are provided by residues Thr231, 261 to 262 (RL), and 269 to 271 (MSK). The short motif at 268–272 (VMSKR) is the 'KMSKS' region element. The tract at residues 317-324 (TKQDNTIE) is interaction with tRNA.

This sequence belongs to the class-I aminoacyl-tRNA synthetase family. In terms of assembly, monomer.

The protein resides in the cytoplasm. The enzyme catalyses tRNA(Gln) + L-glutamine + ATP = L-glutaminyl-tRNA(Gln) + AMP + diphosphate. The polypeptide is Glutamine--tRNA ligase (Escherichia coli (strain 55989 / EAEC)).